Reading from the N-terminus, the 351-residue chain is Prostaglandin reductase 2 (351 aa).

99–100 (FY) provides a ligand contact to substrate. Residues 165-168 (GACG), K192, Y208, N231, 253-259 (CGQISQY), 287-289 (FLV), and N337 contribute to the NADP(+) site. A substrate-binding site is contributed by 288–290 (LVL).

The protein belongs to the NADP-dependent oxidoreductase L4BD family. Monomer.

It localises to the cytoplasm. The enzyme catalyses 13,14-dihydro-15-oxo-prostaglandin E2 + NAD(+) = 15-oxoprostaglandin E2 + NADH + H(+). It catalyses the reaction 13,14-dihydro-15-oxo-prostaglandin E2 + NADP(+) = 15-oxoprostaglandin E2 + NADPH + H(+). It carries out the reaction 13,14-dihydro-15-oxo-PGF2alpha + NADP(+) = 15-oxoprostaglandin F2alpha + NADPH + H(+). The catalysed reaction is 13,14-dihydro-15-oxo-prostaglandin E1 + NADP(+) = 15-oxoprostaglandin E1 + NADPH + H(+). The enzyme catalyses 13,14-dihydro-15-oxo-prostaglandin F1alpha + NADP(+) = 15-oxoprostaglandin F1alpha + NADPH + H(+). Functionally, functions as 15-oxo-prostaglandin 13-reductase and acts on 15-keto-PGE1, 15-keto-PGE2, 15-keto-PGE1-alpha and 15-keto-PGE2-alpha with highest activity towards 15-keto-PGE2. Overexpression represses transcriptional activity of PPARG and inhibits adipocyte differentiation. This chain is Prostaglandin reductase 2 (PTGR2), found in Bos taurus (Bovine).